We begin with the raw amino-acid sequence, 607 residues long: UvrABC system protein C (607 aa).

The region spanning 16 to 94 (GRPGVYRMFD…IKEWRPPYNI (79 aa)) is the GIY-YIG domain. The UVR domain occupies 203-238 (NALTDELSAGMEQAASTLDFEKAAELRDQISLLRRV).

Belongs to the UvrC family. Interacts with UvrB in an incision complex.

It localises to the cytoplasm. In terms of biological role, the UvrABC repair system catalyzes the recognition and processing of DNA lesions. UvrC both incises the 5' and 3' sides of the lesion. The N-terminal half is responsible for the 3' incision and the C-terminal half is responsible for the 5' incision. The polypeptide is UvrABC system protein C (Pseudomonas protegens (strain DSM 19095 / LMG 27888 / CFBP 6595 / CHA0)).